Reading from the N-terminus, the 424-residue chain is Serine/threonine-protein kinase H1 (424 aa).

Gly-2 carries N-myristoyl glycine lipidation. Residue Cys-3 is the site of S-palmitoyl cysteine attachment. The segment at 56-80 (SQYAHPCPGPPTAGHTEPPSEPPRR) is disordered. Positions 98 to 355 (YDIKALIGRG…ALQALRHPWV (258 aa)) constitute a Protein kinase domain. ATP contacts are provided by residues 104–112 (IGRGSFSRV) and Lys-127. The active-site Proton acceptor is the Asp-218. The interval 378–407 (RASSRCQSTKSAQSTRSSRSTRSNKSRRVR) is disordered. A phosphoserine; by autocatalysis mark is found at Ser-380 and Ser-381. A compositionally biased stretch (low complexity) spans 385–398 (STKSAQSTRSSRST).

This sequence belongs to the protein kinase superfamily. CAMK Ser/Thr protein kinase family. As to quaternary structure, homodimer. In terms of processing, autophosphorylated on serine residues. Post-translationally, myristoylated. Required for membrane association. Prerequisite for palmitoylation to occur. Palmitoylated. As to expression, expressed in all tissues and cell lines tested with the highest level of abundance in testis.

The protein localises to the golgi apparatus. The protein resides in the cytoplasm. It localises to the cytoskeleton. Its subcellular location is the microtubule organizing center. It is found in the centrosome. The protein localises to the nucleus speckle. The protein resides in the endoplasmic reticulum membrane. It localises to the cell membrane. The enzyme catalyses L-seryl-[protein] + ATP = O-phospho-L-seryl-[protein] + ADP + H(+). It catalyses the reaction L-threonyl-[protein] + ATP = O-phospho-L-threonyl-[protein] + ADP + H(+). With respect to regulation, activity depends on Ca(2+) concentration. Its function is as follows. Serine/threonine protein kinase that may be involved in the regulation of pre-mRNA processing. It may phosphorylate components of nuclear splice factor compartments (SFC), such as non-snRNP splicing factors containing a serine/arginine-rich domain (SR proteins). Reversible phosphorylation of SR proteins may cause their release into the nucleoplasm and change their local concentration, thereby influencing alternative splicing. This is Serine/threonine-protein kinase H1 (PSKH1) from Homo sapiens (Human).